Reading from the N-terminus, the 200-residue chain is UPF0637 protein LCABL_14170 (200 aa).

Belongs to the UPF0637 family.

This is UPF0637 protein LCABL_14170 from Lacticaseibacillus casei (strain BL23) (Lactobacillus casei).